We begin with the raw amino-acid sequence, 115 residues long: uncharacterized protein (115 aa).

The segment at 9 to 30 (EGLRERGASGKNEQKKKKKEKI) is disordered.

This is an uncharacterized protein from Saccharomyces cerevisiae (strain ATCC 204508 / S288c) (Baker's yeast).